Consider the following 72-residue polypeptide: Translation initiation factor IF-1 (72 aa).

Positions 1 to 72 (MAKEESIEIE…SKGRITYRYK (72 aa)) constitute an S1-like domain.

Belongs to the IF-1 family. In terms of assembly, component of the 30S ribosomal translation pre-initiation complex which assembles on the 30S ribosome in the order IF-2 and IF-3, IF-1 and N-formylmethionyl-tRNA(fMet); mRNA recruitment can occur at any time during PIC assembly.

It is found in the cytoplasm. Functionally, one of the essential components for the initiation of protein synthesis. Stabilizes the binding of IF-2 and IF-3 on the 30S subunit to which N-formylmethionyl-tRNA(fMet) subsequently binds. Helps modulate mRNA selection, yielding the 30S pre-initiation complex (PIC). Upon addition of the 50S ribosomal subunit IF-1, IF-2 and IF-3 are released leaving the mature 70S translation initiation complex. The protein is Translation initiation factor IF-1 of Chlorobium phaeovibrioides (strain DSM 265 / 1930) (Prosthecochloris vibrioformis (strain DSM 265)).